The chain runs to 346 residues: L-threonine 3-dehydrogenase (346 aa).

Cys42 contributes to the Zn(2+) binding site. Catalysis depends on charge relay system residues Thr44 and His47. The Zn(2+) site is built by His67, Glu68, Cys97, Cys100, Cys103, and Cys111. Residues Ile179, Asp199, Arg204, 266–268 (LSL), and 291–292 (IT) each bind NAD(+).

It belongs to the zinc-containing alcohol dehydrogenase family. Homotetramer. The cofactor is Zn(2+).

It localises to the cytoplasm. It catalyses the reaction L-threonine + NAD(+) = (2S)-2-amino-3-oxobutanoate + NADH + H(+). Its pathway is amino-acid degradation; L-threonine degradation via oxydo-reductase pathway; glycine from L-threonine: step 1/2. In terms of biological role, catalyzes the NAD(+)-dependent oxidation of L-threonine to 2-amino-3-ketobutyrate. The protein is L-threonine 3-dehydrogenase of Bacillus licheniformis (strain ATCC 14580 / DSM 13 / JCM 2505 / CCUG 7422 / NBRC 12200 / NCIMB 9375 / NCTC 10341 / NRRL NRS-1264 / Gibson 46).